Here is a 138-residue protein sequence, read N- to C-terminus: Large ribosomal subunit protein uL16 (138 aa).

Belongs to the universal ribosomal protein uL16 family. As to quaternary structure, part of the 50S ribosomal subunit.

Its function is as follows. Binds 23S rRNA and is also seen to make contacts with the A and possibly P site tRNAs. The protein is Large ribosomal subunit protein uL16 of Nitrosomonas europaea (strain ATCC 19718 / CIP 103999 / KCTC 2705 / NBRC 14298).